Consider the following 872-residue polypeptide: Alanine--tRNA ligase (872 aa).

Residues His566, His570, Cys668, and His672 each contribute to the Zn(2+) site.

This sequence belongs to the class-II aminoacyl-tRNA synthetase family. The cofactor is Zn(2+).

It is found in the cytoplasm. It catalyses the reaction tRNA(Ala) + L-alanine + ATP = L-alanyl-tRNA(Ala) + AMP + diphosphate. Catalyzes the attachment of alanine to tRNA(Ala) in a two-step reaction: alanine is first activated by ATP to form Ala-AMP and then transferred to the acceptor end of tRNA(Ala). Also edits incorrectly charged Ser-tRNA(Ala) and Gly-tRNA(Ala) via its editing domain. In Lactococcus lactis subsp. cremoris (strain SK11), this protein is Alanine--tRNA ligase.